Here is a 203-residue protein sequence, read N- to C-terminus: Histidine biosynthesis bifunctional protein HisIE (203 aa).

Residues methionine 1–phenylalanine 114 are phosphoribosyl-AMP cyclohydrolase. The tract at residues leucine 115 to glutamine 203 is phosphoribosyl-ATP pyrophosphohydrolase.

This sequence in the N-terminal section; belongs to the PRA-CH family. It in the C-terminal section; belongs to the PRA-PH family.

It is found in the cytoplasm. It carries out the reaction 1-(5-phospho-beta-D-ribosyl)-ATP + H2O = 1-(5-phospho-beta-D-ribosyl)-5'-AMP + diphosphate + H(+). The enzyme catalyses 1-(5-phospho-beta-D-ribosyl)-5'-AMP + H2O = 1-(5-phospho-beta-D-ribosyl)-5-[(5-phospho-beta-D-ribosylamino)methylideneamino]imidazole-4-carboxamide. The protein operates within amino-acid biosynthesis; L-histidine biosynthesis; L-histidine from 5-phospho-alpha-D-ribose 1-diphosphate: step 2/9. It functions in the pathway amino-acid biosynthesis; L-histidine biosynthesis; L-histidine from 5-phospho-alpha-D-ribose 1-diphosphate: step 3/9. The polypeptide is Histidine biosynthesis bifunctional protein HisIE (hisI) (Salmonella typhimurium (strain LT2 / SGSC1412 / ATCC 700720)).